Reading from the N-terminus, the 159-residue chain is CASP-like protein 1C1 (159 aa).

Topologically, residues 1–6 (MAKIKR) are cytoplasmic. The helical transmembrane segment at 7-27 (IITTLVRLLVLGAALSATIVM) threads the bilayer. Residues 28 to 50 (VTSHDSAEVLNLSFDAKYTNARA) lie on the Extracellular side of the membrane. N-linked (GlcNAc...) asparagine glycosylation is present at N38. A helical transmembrane segment spans residues 51–73 (FVYFAITNAIASGYSFIALFLSF). Residues 74 to 86 (STPLWHLVFLLDV) lie on the Cytoplasmic side of the membrane. The helical transmembrane segment at 87 to 107 (FMTLLLTSSISVALAIADVGK) threads the bilayer. Residues 108 to 130 (KGNSHAGWLPVCGQVPEFCDHVT) lie on the Extracellular side of the membrane. The helical transmembrane segment at 131–151 (GALIAGFSAAVLYLVLLLFSI) threads the bilayer. Residues 152 to 159 (HAVLNPKP) are Cytoplasmic-facing.

It belongs to the Casparian strip membrane proteins (CASP) family. In terms of assembly, homodimer and heterodimers.

It localises to the cell membrane. The polypeptide is CASP-like protein 1C1 (Vitis vinifera (Grape)).